The sequence spans 170 residues: Siroheme decarboxylase NirL subunit (170 aa).

This sequence belongs to the Ahb/Nir family. In terms of assembly, probably forms a complex composed of NirD, NirL, NirG and NirH. All proteins are required for the total conversion of siroheme to didecarboxysiroheme.

The catalysed reaction is siroheme + 2 H(+) = 12,18-didecarboxysiroheme + 2 CO2. It participates in porphyrin-containing compound metabolism. Its function is as follows. Involved in heme d1 biosynthesis. Catalyzes the decarboxylation of siroheme into didecarboxysiroheme. The chain is Siroheme decarboxylase NirL subunit from Stutzerimonas stutzeri (Pseudomonas stutzeri).